Consider the following 438-residue polypeptide: Serine/threonine-protein kinase VIK (438 aa).

Positions 1-31 (MSSDSPAAGDGGEQAAAGTSVPSPSYDKQKE) are disordered. ANK repeat units follow at residues 36–65 (SRTSLILWHAHQNDAAAVRKLLEEDPTLVH), 70–99 (DKRTPLHVASLHGWIDVVKCLLEFGADVNA), and 103–133 (WKNTPLADAEGARKQKMIELLKSHGGLSYGQ). The region spanning 162–427 (FSNAAMIGKG…KRLEKIKETL (266 aa)) is the Protein kinase domain. Residues 168 to 176 (IGKGSFGEI) and Lys189 contribute to the ATP site. Residue Asp285 is the Proton acceptor of the active site.

This sequence belongs to the protein kinase superfamily. Ser/Thr protein kinase family. Interacts with BRL2. Binds to MSSP1/TMT1 at the tonoplast. In terms of processing, phosphorylated. Restricted to mature vascular cells. Mostly expressed in mature leaves and seeds, and, to a lower level, in seedlings, young leaves, flowers and siliques.

Its subcellular location is the vacuole. It catalyses the reaction L-seryl-[protein] + ATP = O-phospho-L-seryl-[protein] + ADP + H(+). It carries out the reaction L-threonyl-[protein] + ATP = O-phospho-L-threonyl-[protein] + ADP + H(+). Its function is as follows. Serine/threonine protein kinase which may function as an adapter protein for BRL2. Required during vascular development for the establishment of vein pattern in foliar organs. Mediates MSSP1/TMT1 phosphorylation and activation to enhance its carrier activity and consequently vacuolar sugar accumulation, particularly in response to cold. This chain is Serine/threonine-protein kinase VIK, found in Arabidopsis thaliana (Mouse-ear cress).